Here is a 385-residue protein sequence, read N- to C-terminus: Proliferation-associated protein A (385 aa).

The protein belongs to the peptidase M24 family.

The sequence is that of Proliferation-associated protein A (prlA) from Dictyostelium discoideum (Social amoeba).